The sequence spans 419 residues: Copalyl diphosphate synthase 2, chloroplastic (419 aa).

Residue lysine 82 coordinates substrate.

The protein belongs to the terpene synthase family. Tpsc subfamily. Requires Mg(2+) as cofactor. Ubiquitous expression in roots, stems, leaves and flowers.

The protein localises to the plastid. The protein resides in the chloroplast. The enzyme catalyses (2E,6E,10E)-geranylgeranyl diphosphate = (+)-copalyl diphosphate. Its pathway is secondary metabolite biosynthesis; terpenoid biosynthesis. Functionally, involved in the biosynthesis of ent-kaurene diterpenoids natural products such as oridonin, miltiradiene, eriocalyxin B and nezukol, known to exhibit antitumor, anti-inflammatory and antibacterial activities. Catalyzes the conversion of (2E,6E,10E)-geranylgeranyl diphosphate (GGPP) to (+)-copalyl diphosphate ((+)-CPP). This is Copalyl diphosphate synthase 2, chloroplastic from Isodon rubescens (Rabdosia rubescens).